Consider the following 1235-residue polypeptide: Ubiquitin carboxyl-terminal hydrolase 40 (1235 aa).

The USP domain maps to 41–482; sequence SGIRNQGGTC…SAYMLFYRKS (442 aa). C50 acts as the Nucleophile in catalysis. H305 (proton acceptor) is an active-site residue. A compositionally biased stretch (basic and acidic residues) spans 1180–1190; it reads IRDDTGKEKQK. The segment at 1180 to 1235 is disordered; it reads IRDDTGKEKQKQRALGRRKSQEALHEQSSYILSSAETPARPRAPETSLSIHVGSFR. Polar residues predominate over residues 1205–1215; that stretch reads EQSSYILSSAE.

Belongs to the peptidase C19 family. As to expression, broadly expressed.

It carries out the reaction Thiol-dependent hydrolysis of ester, thioester, amide, peptide and isopeptide bonds formed by the C-terminal Gly of ubiquitin (a 76-residue protein attached to proteins as an intracellular targeting signal).. Its function is as follows. May be catalytically inactive. The polypeptide is Ubiquitin carboxyl-terminal hydrolase 40 (USP40) (Homo sapiens (Human)).